Here is a 948-residue protein sequence, read N- to C-terminus: Sensor histidine kinase RcsC (948 aa).

Residues 1–20 (MKYLASFRTTLKVSRYLFRA) are Cytoplasmic-facing. A helical membrane pass occupies residues 21-41 (LALLIWLLIAFVSVFYIVNAL). Residues 42–313 (HQRESEIRQE…PVDLVLERIR (272 aa)) are Periplasmic-facing. The chain crosses the membrane as a helical span at residues 314–334 (ILILNAILLNVLVGAGLFTLA). Topologically, residues 335–948 (RMYERRIFIP…YAERVRKTRA (614 aa)) are cytoplasmic. A PAS domain is found at 357 to 425 (QFNRKIVASA…VLTSNNTNLQ (69 aa)). In terms of domain architecture, Histidine kinase spans 476 to 692 (TVSHELRTPL…QFTLRIPLYG (217 aa)). His-479 is modified (phosphohistidine; by autocatalysis). The ABL domain maps to 705-805 (AGTCCWLAVR…ARIYSIELDS (101 aa)). Residues 826 to 940 (MILVVDDHPI…VLKQTLAVYA (115 aa)) enclose the Response regulatory domain. Asp-875 carries the post-translational modification 4-aspartylphosphate.

The protein belongs to the RcsC family. Interacts with RcsD. In terms of processing, autophosphorylated. Activation probably requires a transfer of a phosphate group from a His in the transmitter domain to an Asp in the receiver domain.

It is found in the cell inner membrane. The catalysed reaction is ATP + protein L-histidine = ADP + protein N-phospho-L-histidine.. In terms of biological role, component of the Rcs signaling system, which controls transcription of numerous genes. RcsC functions as a membrane-associated protein kinase that phosphorylates RcsD in response to environmental signals. The phosphoryl group is then transferred to the response regulator RcsB. The chain is Sensor histidine kinase RcsC from Salmonella typhimurium (strain LT2 / SGSC1412 / ATCC 700720).